A 334-amino-acid polypeptide reads, in one-letter code: MAKPIVFSGVQPSGELTIGNYLGALRNWVKMQEDYECIFCVVDLHAITVRQDPVALRKATLDVLALYLACGIDPNKSTIFVQSHVPEHTQLSWVLNCYTYFGEMSRMTQFKDKSARYAENINVGLFDYPVLMAADILLYQAKSVPVGDDQKQHLEITRDIANRFNALYGNIFTIPEIFIGKAGARIMSLQDPEKKMSKSDDNRNNVVTLLEDPKSVAKKIKRAVTDSDEPPVVRYDVQNKAGVSNLLDILSAVTDKPIADLEKEFEGKMYGHLKTAVADEVSTLLASLQERFHQYRNDETLLDNILRQGAEKARAKAQETLAKVYEAVGFVAAK.

Residues 11–13 and 19–20 each bind ATP; these read QPS and GN. The short motif at 12–20 is the 'HIGH' region element; that stretch reads PSGELTIGN. Residue Asp-135 coordinates L-tryptophan. ATP contacts are provided by residues 147-149, Ile-186, and 195-199; these read GDD and KMSKS. The short motif at 195–199 is the 'KMSKS' region element; that stretch reads KMSKS.

This sequence belongs to the class-I aminoacyl-tRNA synthetase family. Homodimer.

The protein resides in the cytoplasm. The catalysed reaction is tRNA(Trp) + L-tryptophan + ATP = L-tryptophyl-tRNA(Trp) + AMP + diphosphate + H(+). Its function is as follows. Catalyzes the attachment of tryptophan to tRNA(Trp). This is Tryptophan--tRNA ligase from Haemophilus influenzae (strain ATCC 51907 / DSM 11121 / KW20 / Rd).